The primary structure comprises 206 residues: Adenylate kinase (206 aa).

A disordered region spans residues 1 to 21; it reads MSQPKILLLGAPGAGKGTQSS. Residue 13-18 coordinates ATP; it reads GAGKGT. Residues 33-61 are NMP; it reads TTGDALRANKDMETEHGTPREFMEAGELV. AMP is bound by residues T34, R39, 59–61, 84–87, and Q91; these read ELV and GYPR. Residues 120-153 form an LID region; the sequence is GRRMDPETGDIYHTEFNMPDDEEVRERLVQRDDD. ATP is bound by residues R121 and 130–131; that span reads IY. 2 residues coordinate AMP: R150 and R161. A189 provides a ligand contact to ATP.

The protein belongs to the adenylate kinase family. Monomer.

It localises to the cytoplasm. The catalysed reaction is AMP + ATP = 2 ADP. Its pathway is purine metabolism; AMP biosynthesis via salvage pathway; AMP from ADP: step 1/1. Catalyzes the reversible transfer of the terminal phosphate group between ATP and AMP. Plays an important role in cellular energy homeostasis and in adenine nucleotide metabolism. The chain is Adenylate kinase from Natronomonas pharaonis (strain ATCC 35678 / DSM 2160 / CIP 103997 / JCM 8858 / NBRC 14720 / NCIMB 2260 / Gabara) (Halobacterium pharaonis).